A 715-amino-acid polypeptide reads, in one-letter code: ATP-dependent DNA helicase Hel308 (715 aa).

The Q motif motif lies at 1 to 29 (MKVGELNVSEKIKEILRERGIEELYPPQA). ATP contacts are provided by residues Q28 and 46-53 (IPTASGKT). The Helicase ATP-binding domain occupies 33–197 (TSGVLEGENL…WLNAKLIRSD (165 aa)). The short motif at 145 to 148 (DEIH) is the DEAH box element. In terms of domain architecture, Helicase C-terminal spans 226–422 (WEELVYDAVK…ILRSQILALI (197 aa)).

The protein belongs to the helicase family. Hel308 subfamily. Monomer.

The catalysed reaction is Couples ATP hydrolysis with the unwinding of duplex DNA by translocating in the 3'-5' direction.. It catalyses the reaction ATP + H2O = ADP + phosphate + H(+). DNA-dependent ATPase and 3'-5' DNA helicase that may be involved in repair of stalled replication forks. In terms of biological role, rapidly unwinds double-stranded (ds)DNA with a 3'-overhang, has no strand reannealing capabilities. Binds single-stranded (ss)DNA, dsDNA with a 3'-overhang and ssRNA. This Pyrococcus abyssi (strain GE5 / Orsay) protein is ATP-dependent DNA helicase Hel308.